The primary structure comprises 134 residues: MAHTNDTIADMLTRIRNATMARHESVAVPATRMTRSIARVLHEEGFVSDWKEEGEGIHAQLVLRLKYKGKGRKPIINGLKRVSRPGLRVYCNHKELPRVLGGIGIAIISTSNGIMTDRDARKQGIGGEVLCYVY.

This sequence belongs to the universal ribosomal protein uS8 family. In terms of assembly, part of the 30S ribosomal subunit. Contacts proteins S5 and S12.

One of the primary rRNA binding proteins, it binds directly to 16S rRNA central domain where it helps coordinate assembly of the platform of the 30S subunit. The polypeptide is Small ribosomal subunit protein uS8 (Synechococcus sp. (strain JA-3-3Ab) (Cyanobacteria bacterium Yellowstone A-Prime)).